We begin with the raw amino-acid sequence, 451 residues long: 2,4-dinitrotoluene dioxygenase system, large oxygenase component (451 aa).

In terms of domain architecture, Rieske spans 42 to 126; that stretch reads WLFLTHDSLI…LQSVPFEKEL (85 aa). Cys84, His86, Cys104, and His107 together coordinate [2Fe-2S] cluster. The Fe cation site is built by His211, His216, and Asp365.

Belongs to the bacterial ring-hydroxylating dioxygenase alpha subunit family. The 2,4-dinitrotoluene dioxygenase (DNTDO) multicomponent enzyme system is composed of an electron transfer component and a dioxygenase component (iron sulfur protein (ISP)). The electron transfer component is composed of a ferredoxin reductase (DntAa) and a ferredoxin (DntAb), and the dioxygenase component is formed of a large alpha subunit (DntAc) and a small beta subunit (DntAd). It depends on [2Fe-2S] cluster as a cofactor. Fe(2+) serves as cofactor.

It catalyses the reaction 2,4-dinitrotoluene + NADH + O2 = 4-methyl-5-nitrocatechol + nitrite + NAD(+). Functionally, component of the 2,4-dinitrotoluene dioxygenase (DNTDO) multicomponent enzyme system which catalyzes the incorporation of both atoms of molecular oxygen into 2,4-dinitrotoluene (DNT) to form 4-methyl-5-nitrocatechol (MNC) and nitrite. The alpha subunit has a catalytic role in the holoenzyme. Also able to convert naphthalene to cis-(1R,2S)-dihydroxy-1,2-dihydronaphthalene. The protein is 2,4-dinitrotoluene dioxygenase system, large oxygenase component of Burkholderia sp. (strain RASC).